Here is a 239-residue protein sequence, read N- to C-terminus: Lactate utilization protein A (239 aa).

Belongs to the LutA/YkgE family.

Functionally, is involved in L-lactate degradation and allows cells to grow with lactate as the sole carbon source. The protein is Lactate utilization protein A of Shouchella clausii (strain KSM-K16) (Alkalihalobacillus clausii).